The following is a 132-amino-acid chain: Small ribosomal subunit protein uS8 (132 aa).

The protein belongs to the universal ribosomal protein uS8 family. In terms of assembly, part of the 30S ribosomal subunit. Contacts proteins S5 and S12.

One of the primary rRNA binding proteins, it binds directly to 16S rRNA central domain where it helps coordinate assembly of the platform of the 30S subunit. The sequence is that of Small ribosomal subunit protein uS8 from Borrelia turicatae (strain 91E135).